We begin with the raw amino-acid sequence, 152 residues long: Methylglyoxal synthase (152 aa).

The MGS-like domain occupies 6–152 (RTIPAQKHIA…YQRYLQDRLK (147 aa)). Substrate is bound by residues histidine 19, lysine 23, 45 to 48 (TGTT), and 65 to 66 (SG). Aspartate 71 serves as the catalytic Proton donor/acceptor. A substrate-binding site is contributed by histidine 98.

Belongs to the methylglyoxal synthase family.

It catalyses the reaction dihydroxyacetone phosphate = methylglyoxal + phosphate. Catalyzes the formation of methylglyoxal from dihydroxyacetone phosphate. This Pectobacterium atrosepticum (strain SCRI 1043 / ATCC BAA-672) (Erwinia carotovora subsp. atroseptica) protein is Methylglyoxal synthase.